We begin with the raw amino-acid sequence, 200 residues long: Probable molybdenum cofactor guanylyltransferase (200 aa).

GTP is bound by residues 9–11 (LAG), Lys21, Asp69, and Asp100. Asp100 lines the Mg(2+) pocket.

It belongs to the MobA family. It depends on Mg(2+) as a cofactor.

The protein localises to the cytoplasm. The catalysed reaction is Mo-molybdopterin + GTP + H(+) = Mo-molybdopterin guanine dinucleotide + diphosphate. Transfers a GMP moiety from GTP to Mo-molybdopterin (Mo-MPT) cofactor (Moco or molybdenum cofactor) to form Mo-molybdopterin guanine dinucleotide (Mo-MGD) cofactor. The sequence is that of Probable molybdenum cofactor guanylyltransferase from Bacillus cereus (strain Q1).